Here is a 103-residue protein sequence, read N- to C-terminus: Pterin-4-alpha-carbinolamine dehydratase 2 (103 aa).

The protein belongs to the pterin-4-alpha-carbinolamine dehydratase family. In terms of tissue distribution, highest level found in the kidney, liver, heart and ovarian follicles.

The enzyme catalyses (4aS,6R)-4a-hydroxy-L-erythro-5,6,7,8-tetrahydrobiopterin = (6R)-L-erythro-6,7-dihydrobiopterin + H2O. In terms of biological role, involved in tetrahydrobiopterin biosynthesis. Seems to both prevent the formation of 7-pterins and accelerate the formation of quinonoid-BH2. Functionally, regulates the dimerization of homeodomain protein HNF-1-alpha and enhances its transcriptional activity. The chain is Pterin-4-alpha-carbinolamine dehydratase 2 (PCBD2) from Gallus gallus (Chicken).